Reading from the N-terminus, the 62-residue chain is GTNAAMRKAFNYQDTAKNGKKCSGCAQFVPGASPTAAGGCKVIPGDNQIAPGGYCDAFIVKK.

Cys-22, Cys-25, Cys-40, and Cys-55 together coordinate [4Fe-4S] cluster.

The protein belongs to the high-potential iron-sulfur protein (HiPIP) family. As to quaternary structure, homodimer.

Functionally, specific class of high-redox-potential 4Fe-4S ferredoxins. Functions in anaerobic electron transport in most purple and in some other photosynthetic bacteria and in at least one genus (Paracoccus) of halophilic, denitrifying bacteria. This is High-potential iron-sulfur protein (hip) from Rhodocyclus tenuis (Rhodospirillum tenue).